Reading from the N-terminus, the 74-residue chain is Putative membrane protein insertion efficiency factor (74 aa).

It belongs to the UPF0161 family.

The protein resides in the cell inner membrane. Functionally, could be involved in insertion of integral membrane proteins into the membrane. The protein is Putative membrane protein insertion efficiency factor of Anaeromyxobacter sp. (strain Fw109-5).